Here is a 534-residue protein sequence, read N- to C-terminus: NAD(P)H-quinone oxidoreductase chain 4 2 (534 aa).

Helical transmembrane passes span 9 to 29 (FPWLTTVIAYPVLAALFIPLI), 51 to 71 (WFALFIAVTDLLILLAGFYVG), 106 to 126 (LILLTAFITTLAILAAWPVTL), 130 to 150 (LFYFLMLAMYGGQIGVFAVQD), 152 to 172 (LLFFLMWELELIPVYLLLSIW), 184 to 204 (FILYTALSSLFILVAGLAMAF), 227 to 247 (LLMYGAFLIAYGVKLPIFPLH), 258 to 278 (TAPVHMLLAGILLKMGGYALM), 290 to 310 (LYFAPVLIVLGVVNIIFAALT), 326 to 346 (ISHMGFVLIGIGSLTEIGMSG), 347 to 367 (AMLQMISHGLIGASLFFLVGA), 399 to 419 (LASLALPGMSGFVAEIMVFIG), 432 to 452 (LVVVFLAAVGVILTPIYLLSM), and 479 to 499 (VFIIACLLIPIIGIGLYPKLV).

The protein belongs to the complex I subunit 4 family.

Its subcellular location is the cellular thylakoid membrane. The enzyme catalyses a plastoquinone + NADH + (n+1) H(+)(in) = a plastoquinol + NAD(+) + n H(+)(out). It carries out the reaction a plastoquinone + NADPH + (n+1) H(+)(in) = a plastoquinol + NADP(+) + n H(+)(out). In terms of biological role, NDH-1 shuttles electrons from NAD(P)H, via FMN and iron-sulfur (Fe-S) centers, to quinones in the respiratory chain. The immediate electron acceptor for the enzyme in this species is believed to be plastoquinone. Couples the redox reaction to proton translocation (for every two electrons transferred, four hydrogen ions are translocated across the cytoplasmic membrane), and thus conserves the redox energy in a proton gradient. The chain is NAD(P)H-quinone oxidoreductase chain 4 2 from Synechococcus sp. (strain JA-2-3B'a(2-13)) (Cyanobacteria bacterium Yellowstone B-Prime).